The chain runs to 397 residues: Cysteine desulfurase IscS (397 aa).

Pyridoxal 5'-phosphate-binding positions include 72 to 73 (GS), Asn-152, Gln-180, and 200 to 202 (SAH). The residue at position 203 (Lys-203) is an N6-(pyridoxal phosphate)lysine. Residue Thr-238 participates in pyridoxal 5'-phosphate binding. Residue Cys-328 is the Cysteine persulfide intermediate of the active site. Cys-328 is a binding site for [2Fe-2S] cluster.

Belongs to the class-V pyridoxal-phosphate-dependent aminotransferase family. NifS/IscS subfamily. Homodimer. Forms a heterotetramer with IscU, interacts with other sulfur acceptors. Pyridoxal 5'-phosphate is required as a cofactor.

It is found in the cytoplasm. The catalysed reaction is (sulfur carrier)-H + L-cysteine = (sulfur carrier)-SH + L-alanine. The protein operates within cofactor biosynthesis; iron-sulfur cluster biosynthesis. In terms of biological role, master enzyme that delivers sulfur to a number of partners involved in Fe-S cluster assembly, tRNA modification or cofactor biosynthesis. Catalyzes the removal of elemental sulfur atoms from cysteine to produce alanine. Functions as a sulfur delivery protein for Fe-S cluster synthesis onto IscU, an Fe-S scaffold assembly protein, as well as other S acceptor proteins. The protein is Cysteine desulfurase IscS of Clostridium botulinum (strain Kyoto / Type A2).